Consider the following 224-residue polypeptide: Cysteine S-methyltransferase NleE (224 aa).

Positions 49 to 52 (GITR) are interaction with host proteins TAB2, TAB3 and ZRANB3. S-adenosyl-L-methionine contacts are provided by A92, S98, R107, Q111, Y204, and E208.

The protein belongs to the NleE/OspZ family. As to quaternary structure, monomer.

It localises to the secreted. Its subcellular location is the host nucleus. The enzyme catalyses L-cysteinyl-[protein] + S-adenosyl-L-methionine = S-methyl-L-cysteinyl-[protein] + S-adenosyl-L-homocysteine + H(+). Cysteine methyltransferase effector that inhibits host cell NF-kappa-B activation by preventing nuclear translocation of host protein RELA/p65. Acts by mediating cysteine methylation of host proteins TAB2 and TAB3: methylation of a conserved cysteine residue of the RanBP2-type zinc finger (NZF) of TAB2 and TAB3 disrupts zinc-binding, thereby inactivating the ubiquitin chain-binding activity of TAB2 and TAB3, leading to NF-kappa-B inactivation. Also mediates cysteine methylation of host protein ZRANB3, inactivating its ability to bind ubiquitin chains. In Escherichia coli O127:H6 (strain E2348/69 / EPEC), this protein is Cysteine S-methyltransferase NleE.